Here is a 480-residue protein sequence, read N- to C-terminus: UDP-N-acetylmuramoylalanine--D-glutamate ligase (480 aa).

110–116 provides a ligand contact to ATP; that stretch reads GTNGKST.

This sequence belongs to the MurCDEF family.

The protein localises to the cytoplasm. It catalyses the reaction UDP-N-acetyl-alpha-D-muramoyl-L-alanine + D-glutamate + ATP = UDP-N-acetyl-alpha-D-muramoyl-L-alanyl-D-glutamate + ADP + phosphate + H(+). The protein operates within cell wall biogenesis; peptidoglycan biosynthesis. Cell wall formation. Catalyzes the addition of glutamate to the nucleotide precursor UDP-N-acetylmuramoyl-L-alanine (UMA). In Synechococcus sp. (strain JA-2-3B'a(2-13)) (Cyanobacteria bacterium Yellowstone B-Prime), this protein is UDP-N-acetylmuramoylalanine--D-glutamate ligase.